The primary structure comprises 306 residues: Acetylglutamate kinase (306 aa).

Substrate-binding positions include 68 to 69 (GG), Arg90, and Asn195.

It belongs to the acetylglutamate kinase family. ArgB subfamily.

The protein localises to the cytoplasm. It catalyses the reaction N-acetyl-L-glutamate + ATP = N-acetyl-L-glutamyl 5-phosphate + ADP. It functions in the pathway amino-acid biosynthesis; L-arginine biosynthesis; N(2)-acetyl-L-ornithine from L-glutamate: step 2/4. Functionally, catalyzes the ATP-dependent phosphorylation of N-acetyl-L-glutamate. The chain is Acetylglutamate kinase from Chromohalobacter salexigens (strain ATCC BAA-138 / DSM 3043 / CIP 106854 / NCIMB 13768 / 1H11).